Reading from the N-terminus, the 339-residue chain is Dihydroorotase (339 aa).

Zn(2+) contacts are provided by histidine 12 and histidine 14. Substrate contacts are provided by residues 14-16 and asparagine 40; that span reads HVR. Residues lysine 94, histidine 133, histidine 167, and aspartate 239 each contribute to the Zn(2+) site. At lysine 94 the chain carries N6-carboxylysine. Histidine 133 is a binding site for substrate. Aspartate 239 is an active-site residue. 2 residues coordinate substrate: histidine 243 and alanine 255.

Belongs to the metallo-dependent hydrolases superfamily. DHOase family. Class II DHOase subfamily. Homodimer. Zn(2+) serves as cofactor.

The catalysed reaction is (S)-dihydroorotate + H2O = N-carbamoyl-L-aspartate + H(+). Its pathway is pyrimidine metabolism; UMP biosynthesis via de novo pathway; (S)-dihydroorotate from bicarbonate: step 3/3. In terms of biological role, catalyzes the reversible cyclization of carbamoyl aspartate to dihydroorotate. The polypeptide is Dihydroorotase (Helicobacter pylori (strain J99 / ATCC 700824) (Campylobacter pylori J99)).